The chain runs to 137 residues: Maltose regulon regulatory protein MalI (137 aa).

Residues 6-60 (VTITEVAKHAGVSVTTVSMVLGNKGRISPDTIEKVNASVEALGYIRNRAAANLRS) form the HTH lacI-type domain. A DNA-binding region (H-T-H motif) is located at residues 8-27 (ITEVAKHAGVSVTTVSMVLG).

In terms of biological role, repressor for the malX and malY genes. The polypeptide is Maltose regulon regulatory protein MalI (malI) (Vibrio furnissii).